We begin with the raw amino-acid sequence, 144 residues long: Oleosin H2 (144 aa).

Ala2 carries the N-acetylalanine modification. 3 helical membrane passes run 28-48 (VLAV…AGLI), 53-73 (IIGL…LVPA), and 75-95 (LTIA…ITAL). The short motif at 61–72 (PLFVIFSPILVP) is the Proline-knot element. The disordered stretch occupies residues 124–144 (QETVGQKTREAGQRSQDVIRP).

The protein belongs to the oleosin family. As to expression, expressed in seeds (at protein level).

It localises to the lipid droplet. The protein localises to the membrane. Functionally, may have a structural role to stabilize the lipid body during desiccation of the seed by preventing coalescence of the oil. Probably interacts with both lipid and phospholipid moieties of lipid bodies. May also provide recognition signals for specific lipase anchorage in lipolysis during seedling growth. The chain is Oleosin H2 from Sesamum indicum (Oriental sesame).